Consider the following 128-residue polypeptide: Protein Wnt-8 (128 aa).

Residue Ser-1 is the site of O-palmitoleoyl serine attachment. Cystine bridges form between Cys-69–Cys-109 and Cys-85–Cys-102. N-linked (GlcNAc...) asparagine glycosylation is present at Asn-72.

This sequence belongs to the Wnt family. Post-translationally, palmitoleoylation is required for efficient binding to frizzled receptors. Depalmitoleoylation leads to Wnt signaling pathway inhibition. Proteolytic processing by tiki1 and tiki2 promotes oxidation and formation of large disulfide-bond oligomers, leading to inactivation of wnt8.

Its subcellular location is the secreted. The protein localises to the extracellular space. It is found in the extracellular matrix. Functionally, ligand for members of the frizzled family of seven transmembrane receptors. Probable developmental protein. May be a signaling molecule which affects the development of discrete regions of tissues. Is likely to signal over only few cell diameters. The polypeptide is Protein Wnt-8 (WNT-8) (Evasterias troschelii (Mottled sea star)).